The primary structure comprises 82 residues: Small, acid-soluble spore protein gamma-type (82 aa).

2 stretches are compositionally biased toward polar residues: residues 1–24 (MANS…ASGQ) and 32–50 (ASET…SAAG). The segment at 1–82 (MANSNNKTNA…SAEQNKQQNS (82 aa)) is disordered. 2 repeats span residues 19–45 (QSAS…KQNQ) and 46–72 (QSAA…QQNQ). Positions 69–82 (QQNQSAEQNKQQNS) are enriched in low complexity.

This sequence belongs to the gamma-type SASP family.

Its function is as follows. SASP are bound to spore DNA. They are double-stranded DNA-binding proteins that cause DNA to change to an a-like conformation. They protect the DNA backbone from chemical and enzymatic cleavage and are thus involved in dormant spore's high resistance to UV light. The polypeptide is Small, acid-soluble spore protein gamma-type (Bacillus subtilis).